Reading from the N-terminus, the 505-residue chain is Facilitated trehalose transporter Tret1 (505 aa).

At 1-46 (MEMEIKDENLRNSVPFVRQLSTDSVKTKTEYDNEDGTPYKSTTQKL) the chain is on the cytoplasmic side. A helical membrane pass occupies residues 47 to 67 (FLWTQLLAAFAVSVGSMNVGF). At 68–91 (SSGYTSPAVLTMNITLDITKEEIT) the chain is on the extracellular side. Asparagine 80 carries an N-linked (GlcNAc...) asparagine glycan. A helical membrane pass occupies residues 92 to 112 (WVGGLMPLAALVGGIVGGPLI). The Cytoplasmic segment spans residues 113–124 (EYLGRKKTIMGT). A helical transmembrane segment spans residues 125 to 145 (AVPFTIGWMLIANAINVVMVF). The Extracellular segment spans residues 146-149 (AGRV). The helical transmembrane segment at 150–170 (ICGVCVGIVSLAFPVYIGETI) threads the bilayer. Residues 171 to 175 (QPEVR) are Cytoplasmic-facing. The helical transmembrane segment at 176–196 (GALGLLPTAFGNTGILLAFLV) threads the bilayer. Over 197 to 201 (GSYLD) the chain is Extracellular. The helical transmembrane segment at 202–222 (WSNLAFFGAAIPVPFFLLMIL) threads the bilayer. At 223–286 (TPETPRWYVS…QLFSKRYLPA (64 aa)) the chain is on the cytoplasmic side. The chain crosses the membrane as a helical span at residues 287 to 307 (VMISLGLMLFQQLTGINAVIF). Residues 308-323 (YAASIFQMSGSSVDEN) are Extracellular-facing. The helical transmembrane segment at 324 to 344 (LASIIIGVVNFISTFIATMLI) threads the bilayer. Residues 345–350 (DRLGRK) lie on the Cytoplasmic side of the membrane. The chain crosses the membrane as a helical span at residues 351–371 (VLLYISSVAMITTLLALGAYF). The Extracellular portion of the chain corresponds to 372–390 (YLKQNHIDVTAYGWLPLAC). The chain crosses the membrane as a helical span at residues 391–411 (LVIYVLGFSIGFGPIPWLMLG). At 412–419 (EILPSKIR) the chain is on the cytoplasmic side. The chain crosses the membrane as a helical span at residues 420-437 (GTAASLATGFNWTCTFIV). Residues 438–451 (TKTFQNIIDAIYMH) are Extracellular-facing. A helical membrane pass occupies residues 452–472 (GTLWLFAVICIGGLLFVIFFV). Residues 473 to 505 (PETKGKSLEEIEMKLTSGSRRVRNISKQPENIC) lie on the Cytoplasmic side of the membrane.

This sequence belongs to the major facilitator superfamily. Sugar transporter (TC 2.A.1.1) family. Trehalose transporter subfamily. As to expression, expressed in many larval tissues at a low level, moderate levels of expression are seen in testis and head and highest expression in muscle.

It is found in the cell membrane. Functionally, high-capacity facilitative transporter for trehalose. Does not transport maltose, sucrose or lactose. Mediates the bidirectional transfer of trehalose. Responsible for the transport of trehalose synthesized in the fat body and the incorporation of trehalose into other tissues that require a carbon source, thereby regulating trehalose levels in the hemolymph. The chain is Facilitated trehalose transporter Tret1 from Bombyx mori (Silk moth).